A 417-amino-acid polypeptide reads, in one-letter code: MKVLVVGGGGREHAIVHKLSQSDRVEKIYCAPGNAGIGQLAECVNISVEEIEKLKEFALQNKIDITIVGPELPLVEGIVDEFERTGLKIFGPSKKAAMIEGSKYFAKQIMAKYEIPTGRFKAFDRYQEALKFLKETWYPVVIKADGLAQGKGVFIVRDFIEAKEVLDLMMKKRVFGPSGDIVIVEEMLYGKEASIFAFVDGENVLTMMTAMDYKKVYEKDEGPNTGGMGSIAPNPHIDKKTLNEIEEKILKPVVYALKKEGIVYKGVLYAGLMLTKEGPKVLEFNARFGDPETQAILPLLKTDFLEIIEATLEGKLKNLKLEWEDKKAVCVIAASKGYPGEYKKGFEIRGLEEVKEAFVYHAGTSFKDGKIVTSGGRVFGIVALGDSYKEAREIAYREIEKISFEGIYYRKDIAAGY.

The ATP-grasp domain occupies 107–313 (KQIMAKYEIP…FLEIIEATLE (207 aa)). ATP is bound at residue 133–194 (LKETWYPVVI…EEMLYGKEAS (62 aa)). Mg(2+)-binding residues include glutamate 283 and asparagine 285.

The protein belongs to the GARS family. Requires Mg(2+) as cofactor. Mn(2+) serves as cofactor.

It catalyses the reaction 5-phospho-beta-D-ribosylamine + glycine + ATP = N(1)-(5-phospho-beta-D-ribosyl)glycinamide + ADP + phosphate + H(+). Its pathway is purine metabolism; IMP biosynthesis via de novo pathway; N(1)-(5-phospho-D-ribosyl)glycinamide from 5-phospho-alpha-D-ribose 1-diphosphate: step 2/2. This chain is Phosphoribosylamine--glycine ligase, found in Caldanaerobacter subterraneus subsp. tengcongensis (strain DSM 15242 / JCM 11007 / NBRC 100824 / MB4) (Thermoanaerobacter tengcongensis).